Consider the following 268-residue polypeptide: Hydroxyethylthiazole kinase (268 aa).

A substrate-binding site is contributed by M45. ATP contacts are provided by R121 and T167. G194 serves as a coordination point for substrate.

Belongs to the Thz kinase family. Mg(2+) serves as cofactor.

It catalyses the reaction 5-(2-hydroxyethyl)-4-methylthiazole + ATP = 4-methyl-5-(2-phosphooxyethyl)-thiazole + ADP + H(+). Its pathway is cofactor biosynthesis; thiamine diphosphate biosynthesis; 4-methyl-5-(2-phosphoethyl)-thiazole from 5-(2-hydroxyethyl)-4-methylthiazole: step 1/1. In terms of biological role, catalyzes the phosphorylation of the hydroxyl group of 4-methyl-5-beta-hydroxyethylthiazole (THZ). This is Hydroxyethylthiazole kinase from Bacillus thuringiensis (strain Al Hakam).